The chain runs to 334 residues: Methionine adenosyltransferase 2 subunit beta (334 aa).

NADP(+) is bound by residues 37–40 (TGLL), 60–62 (FRR), 71–72 (NL), Cys-93, Arg-97, Tyr-159, and Leu-185. Thr-309 carries the phosphothreonine modification. The tract at residues 319 to 334 (LWPFLIDKRWRQTVFH) is required for interaction with MAT2A.

This sequence belongs to the dTDP-4-dehydrorhamnose reductase family. MAT2B subfamily. As to quaternary structure, heterotrimer; composed of a catalytic MAT2A homodimer that binds one regulatory MAT2B chain. Heterohexamer; composed of a central, catalytic MAT2A homotetramer flanked on either side by a regulatory MAT2B chain. NADP binding increases the affinity for MAT2A.

It functions in the pathway amino-acid biosynthesis; S-adenosyl-L-methionine biosynthesis; S-adenosyl-L-methionine from L-methionine: step 1/1. Functionally, regulatory subunit of S-adenosylmethionine synthetase 2, an enzyme that catalyzes the formation of S-adenosylmethionine from methionine and ATP. Regulates MAT2A catalytic activity by changing its kinetic properties, increasing its affinity for L-methionine. Can bind NADP (in vitro). In Mus musculus (Mouse), this protein is Methionine adenosyltransferase 2 subunit beta (Mat2b).